We begin with the raw amino-acid sequence, 94 residues long: Small ribosomal subunit protein uS17 (94 aa).

Belongs to the universal ribosomal protein uS17 family. In terms of assembly, part of the 30S ribosomal subunit.

One of the primary rRNA binding proteins, it binds specifically to the 5'-end of 16S ribosomal RNA. This is Small ribosomal subunit protein uS17 from Symbiobacterium thermophilum (strain DSM 24528 / JCM 14929 / IAM 14863 / T).